A 198-amino-acid polypeptide reads, in one-letter code: Holliday junction branch migration complex subunit RuvA (198 aa).

Residues 1–64 (MIAHLRGTLL…EDAIALFGFL (64 aa)) form a domain I region. Residues 65–141 (DREEKRLFER…LDDLIAAAPA (77 aa)) form a domain II region. The tract at residues 141 to 145 (AAGPV) is flexible linker. The segment at 146–198 (AAGPAAEDVLSALLNLGYQRPAALKAIETAVEKDAAAGEDFDLLFRAALKLIR) is domain III.

It belongs to the RuvA family. As to quaternary structure, homotetramer. Forms an RuvA(8)-RuvB(12)-Holliday junction (HJ) complex. HJ DNA is sandwiched between 2 RuvA tetramers; dsDNA enters through RuvA and exits via RuvB. An RuvB hexamer assembles on each DNA strand where it exits the tetramer. Each RuvB hexamer is contacted by two RuvA subunits (via domain III) on 2 adjacent RuvB subunits; this complex drives branch migration. In the full resolvosome a probable DNA-RuvA(4)-RuvB(12)-RuvC(2) complex forms which resolves the HJ.

It localises to the cytoplasm. The RuvA-RuvB-RuvC complex processes Holliday junction (HJ) DNA during genetic recombination and DNA repair, while the RuvA-RuvB complex plays an important role in the rescue of blocked DNA replication forks via replication fork reversal (RFR). RuvA specifically binds to HJ cruciform DNA, conferring on it an open structure. The RuvB hexamer acts as an ATP-dependent pump, pulling dsDNA into and through the RuvAB complex. HJ branch migration allows RuvC to scan DNA until it finds its consensus sequence, where it cleaves and resolves the cruciform DNA. The sequence is that of Holliday junction branch migration complex subunit RuvA from Acidobacterium capsulatum (strain ATCC 51196 / DSM 11244 / BCRC 80197 / JCM 7670 / NBRC 15755 / NCIMB 13165 / 161).